Reading from the N-terminus, the 512-residue chain is Histidine ammonia-lyase (512 aa).

Positions alanine 145 to glycine 147 form a cross-link, 5-imidazolinone (Ala-Gly). Serine 146 is subject to 2,3-didehydroalanine (Ser).

Belongs to the PAL/histidase family. In terms of processing, contains an active site 4-methylidene-imidazol-5-one (MIO), which is formed autocatalytically by cyclization and dehydration of residues Ala-Ser-Gly.

Its subcellular location is the cytoplasm. It carries out the reaction L-histidine = trans-urocanate + NH4(+). The protein operates within amino-acid degradation; L-histidine degradation into L-glutamate; N-formimidoyl-L-glutamate from L-histidine: step 1/3. The polypeptide is Histidine ammonia-lyase (Pseudomonas fluorescens (strain SBW25)).